Reading from the N-terminus, the 32-residue chain is Photosystem II reaction center protein T (32 aa).

Residues 3-23 (ALVYTFLLIGTLVVIFFAIFF) form a helical membrane-spanning segment.

The protein belongs to the PsbT family. In terms of assembly, PSII is composed of 1 copy each of membrane proteins PsbA, PsbB, PsbC, PsbD, PsbE, PsbF, PsbH, PsbI, PsbJ, PsbK, PsbL, PsbM, PsbT, PsbX, PsbY, PsbZ, Psb30/Ycf12, at least 3 peripheral proteins of the oxygen-evolving complex and a large number of cofactors. It forms dimeric complexes.

The protein resides in the plastid. The protein localises to the chloroplast thylakoid membrane. In terms of biological role, found at the monomer-monomer interface of the photosystem II (PS II) dimer, plays a role in assembly and dimerization of PSII. PSII is a light-driven water plastoquinone oxidoreductase, using light energy to abstract electrons from H(2)O, generating a proton gradient subsequently used for ATP formation. The chain is Photosystem II reaction center protein T from Emiliania huxleyi (Coccolithophore).